The primary structure comprises 504 residues: Zinc finger protein AEBP2 (504 aa).

Residues 1–219 (MAAALADMAD…SRMDSEDSIS (219 aa)) form a disordered region. A2 carries the post-translational modification N-acetylalanine. Over residues 16-30 (RLSPLSPGSPGPAAR) the composition is skewed to low complexity. 3 positions are modified to phosphoserine: S18, S21, and S24. The segment covering 36 to 49 (PEEEEEEDDEEAEA) has biased composition (acidic residues). Gly residues predominate over residues 59 to 69 (GGAGGGAGGGE). Over residues 86-110 (GDEDEDEEDDEDEGSSSGGAEEESS) the composition is skewed to acidic residues. Residues 129–140 (SLSPGAASSSSG) show a composition bias toward low complexity. At S131 the chain carries Phosphoserine. Residues 142–153 (GDGKEGLEEPKG) show a composition bias toward basic and acidic residues. 2 stretches are compositionally biased toward gly residues: residues 154–168 (PRGGPGGPGSSGGGS) and 178–189 (GDEGYGTGGGGS). 3 positions are modified to phosphoserine: S199, S203, and S204. The segment at 202–287 (MSSDGEPLSR…IHVDGQRGGV (86 aa)) is interaction with RBBP4. The segment at 254-279 (YNCCWDQCQACFNSSPDLADHIRSIH) adopts a C2H2-type 1 zinc-finger fold. The C2H2-type 2; degenerate zinc-finger motif lies at 293 to 315 (KGCKVYNTPSTSQSWLQRHMLTH). The C2H2-type 3 zinc finger occupies 321 to 345 (FKCVVGGCNASFASQGGLARHVPTH). The span at 345 to 358 (HFSQQNSSKVSSQP) shows a compositional bias: polar residues. The segment at 345–387 (HFSQQNSSKVSSQPKAKEESPSKAGMNKRRKLKNKRRRSLPRP) is disordered. Over residues 370–385 (MNKRRKLKNKRRRSLP) the composition is skewed to basic residues. Phosphoserine is present on S383. Residues 400 to 471 (RHRAICFNLS…QLKTKVVHLS (72 aa)) form an interaction with SUZ12 region. An important for nucleosome binding activity of the PRC2 complex region spans residues 488-504 (TMPQKRLKRFDILNFPR).

This sequence belongs to the AEBP2/jing C2H2-type zinc-finger family. Self-associates. Associates with the PRC2 complex, which consists of the core components EED, EZH1 or EZH2, SUZ12, and RBBP4, and various combinations of accessory subunits including AEBP2, JARID2, PHF19, MTF2 and EPOP. Found in a monomeric PRC2.2 (class 2) complex consisting of at least SUZ12, RBBP4, AEBP2 and JARID2. Within the PRC2 complex, interacts directly with SUZ12; competes with PHF19 for SUZ12 binding. Interacts with EED, EZH2, and RBBP4. May also interact with RBBP7. In terms of tissue distribution, expressed in brain, brown adipose tissue, white adipose tissue, heart, kidney, lung, skeletal muscle, small intestine and spleen. Expressed at low levels in liver.

Its subcellular location is the nucleus. Acts as an accessory subunit for the core Polycomb repressive complex 2 (PRC2), which mediates histone H3K27 (H3K27me3) trimethylation on chromatin leading to transcriptional repression of the affected target gene. Plays a role in nucleosome localization of the PRC2 complex. The chain is Zinc finger protein AEBP2 (Aebp2) from Mus musculus (Mouse).